A 143-amino-acid polypeptide reads, in one-letter code: Large ribosomal subunit protein eL28y (143 aa).

The protein belongs to the eukaryotic ribosomal protein eL28 family.

The sequence is that of Large ribosomal subunit protein eL28y (RPL28C) from Arabidopsis thaliana (Mouse-ear cress).